Reading from the N-terminus, the 270-residue chain is Interleukin-33 (270 aa).

A homeodomain-like HTH domain region spans residues 1-65; sequence MKPKMKYSTN…EACYFRRETT (65 aa). The propeptide occupies 1-94; it reads MKPKMKYSTN…CQQQSTVECF (94 aa). The interval 64-111 is interaction with RELA; the sequence is TTKRPSLKTGRKHKRHLVLAACQQQSTVECFAFGISGVQKYTRALHDS.

The protein belongs to the IL-1 family. Highly divergent. In terms of assembly, forms a 1:1:1 heterotrimeric complex with its primary high-affinity receptor IL1RL1 and the coreceptor IL1RAP. Interacts with cargo receptor TMED10; the interaction mediates the translocation from the cytoplasm into the ERGIC (endoplasmic reticulum-Golgi intermediate compartment) and thereby secretion. (Microbial infection) Interacts (in reduced form) with H.polygyrus ARI. The full-length protein can be released from cells and is able to signal via the IL1RL1/ST2 receptor. However, proteolytic processing by CELA1, CSTG/cathepsin G and ELANE/neutrophil elastase produces C-terminal peptides that are more active than the unprocessed full length protein. May also be proteolytically processed by calpains. Proteolytic cleavage mediated by apoptotic caspases including CASP3 and CASP7 results in IL33 inactivation. In vitro proteolytic cleavage by CASP1 was reported but could not be confirmed in vivo suggesting that IL33 is probably not a direct substrate for that caspase. As to expression, expressed at high level in high endothelial venules found in tonsils, Peyer patches and mesenteric lymph nodes. Almost undetectable in placenta.

It is found in the nucleus. It localises to the chromosome. Its subcellular location is the cytoplasm. The protein localises to the cytoplasmic vesicle. The protein resides in the secretory vesicle. It is found in the secreted. In terms of biological role, cytokine that binds to and signals through the IL1RL1/ST2 receptor which in turn activates NF-kappa-B and MAPK signaling pathways in target cells. Involved in the maturation of Th2 cells inducing the secretion of T-helper type 2-associated cytokines. Also involved in activation of mast cells, basophils, eosinophils and natural killer cells. Acts as an enhancer of polarization of alternatively activated macrophages. Acts as a chemoattractant for Th2 cells, and may function as an 'alarmin', that amplifies immune responses during tissue injury. Induces rapid UCP2-dependent mitochondrial rewiring that attenuates the generation of reactive oxygen species and preserves the integrity of Krebs cycle required for persistent production of itaconate and subsequent GATA3-dependent differentiation of inflammation-resolving alternatively activated macrophages. Its function is as follows. In quiescent endothelia the uncleaved form is constitutively and abundantly expressed, and acts as a chromatin-associated nuclear factor with transcriptional repressor properties, it may sequester nuclear NF-kappaB/RELA, lowering expression of its targets. This form is rapidely lost upon angiogenic or pro-inflammatory activation. The polypeptide is Interleukin-33 (Homo sapiens (Human)).